A 243-amino-acid chain; its full sequence is 1-(5-phosphoribosyl)-5-[(5-phosphoribosylamino)methylideneamino] imidazole-4-carboxamide isomerase (243 aa).

Catalysis depends on Asp-8, which acts as the Proton acceptor. Asp-129 acts as the Proton donor in catalysis.

This sequence belongs to the HisA/HisF family.

Its subcellular location is the cytoplasm. It catalyses the reaction 1-(5-phospho-beta-D-ribosyl)-5-[(5-phospho-beta-D-ribosylamino)methylideneamino]imidazole-4-carboxamide = 5-[(5-phospho-1-deoxy-D-ribulos-1-ylimino)methylamino]-1-(5-phospho-beta-D-ribosyl)imidazole-4-carboxamide. It participates in amino-acid biosynthesis; L-histidine biosynthesis; L-histidine from 5-phospho-alpha-D-ribose 1-diphosphate: step 4/9. In Moorella thermoacetica (strain ATCC 39073 / JCM 9320), this protein is 1-(5-phosphoribosyl)-5-[(5-phosphoribosylamino)methylideneamino] imidazole-4-carboxamide isomerase.